The following is a 548-amino-acid chain: MAKELRFGDDARLQMLAGVNALADAVQVTMGPRGRNVVLEKSYGAPTVTKDGVSVAKEIEFEHRFMNMGAQMVKEVASKTSDTAGDGTTTATVLARSILVEGHKAVAAGMNPMDLKRGIDKAVLAVTKKLQAMSKPCKDSKAIAQVGTISANSDEAIGAIIAEAMEKVGKEGVITVEDGNGLENELSVVEGMQFDRGYISPYFINNQQNMSCELEHPFILLVDKKVSSIREMLSVLEGVAKSGRPLLIIAEDVEGEALATLVVNNMRGIVKVCAVKAPGFGDRRKAMLQDIAILTKGQVISEEIGKSLEGATLEDLGSAKRIVVTKENTTVIDGEGKATEINARIAQIRAQMEETTSDYDREKLQERVAKLAGGVAVIKVGAATEVEMKEKKARVEDALHATRAAVEEGIVAGGGVALIRAQKALDSLKGDNDDQNMGINILRRAIESPMRQIVTNAGYEASVVVNKVAEHKDNYGFNAATGEYGDMVEMGILDPTKVTRMALQNAASVASLMLTTECMVADLPKKEEGVGAGDMGGMGGMGGMGGMM.

Residues 29 to 32 (TMGP), Lys50, 86 to 90 (DGTTT), Gly414, 478 to 480 (NAA), and Asp494 each bind ATP.

It belongs to the chaperonin (HSP60) family. In terms of assembly, forms a cylinder of 14 subunits composed of two heptameric rings stacked back-to-back. Interacts with the co-chaperonin GroES.

The protein resides in the cytoplasm. The enzyme catalyses ATP + H2O + a folded polypeptide = ADP + phosphate + an unfolded polypeptide.. In terms of biological role, together with its co-chaperonin GroES, plays an essential role in assisting protein folding. The GroEL-GroES system forms a nano-cage that allows encapsulation of the non-native substrate proteins and provides a physical environment optimized to promote and accelerate protein folding. This Legionella pneumophila (strain Corby) protein is Chaperonin GroEL.